Reading from the N-terminus, the 89-residue chain is Large ribosomal subunit protein bL27 (89 aa).

The tract at residues Met1–Phe26 is disordered.

It belongs to the bacterial ribosomal protein bL27 family.

The sequence is that of Large ribosomal subunit protein bL27 from Nitratidesulfovibrio vulgaris (strain DSM 19637 / Miyazaki F) (Desulfovibrio vulgaris).